The chain runs to 233 residues: MTTVKLTYFGHSAFHVEVDGVGIAIDPWITNPLSKTTLEDYLKNFKTDLVVITHAHEDHIGDALEIMRRTGAKFFSIHEIYVDLTQKGFQGIGANIGGPAKLDDVAPGLGIALTPATHSSYDKGVPTGAIIFKDGKALVYHAGDTGLFAEMQFIGELYAPKVALLPIGGHYTMDIEQALLATKLLRPEVVVPMHYNTFPPIRADPNEFKQKVESAGLAKVRVMEPGETVTFEF.

This sequence belongs to the UPF0173 family.

This is UPF0173 metal-dependent hydrolase Igni_1254 from Ignicoccus hospitalis (strain KIN4/I / DSM 18386 / JCM 14125).